We begin with the raw amino-acid sequence, 214 residues long: Probable transaldolase (214 aa).

The Schiff-base intermediate with substrate role is filled by Lys-83.

This sequence belongs to the transaldolase family. Type 3B subfamily.

Its subcellular location is the cytoplasm. It catalyses the reaction D-sedoheptulose 7-phosphate + D-glyceraldehyde 3-phosphate = D-erythrose 4-phosphate + beta-D-fructose 6-phosphate. It participates in carbohydrate degradation; pentose phosphate pathway; D-glyceraldehyde 3-phosphate and beta-D-fructose 6-phosphate from D-ribose 5-phosphate and D-xylulose 5-phosphate (non-oxidative stage): step 2/3. Transaldolase is important for the balance of metabolites in the pentose-phosphate pathway. The protein is Probable transaldolase of Leptospira interrogans serogroup Icterohaemorrhagiae serovar copenhageni (strain Fiocruz L1-130).